Reading from the N-terminus, the 217-residue chain is Small ribosomal subunit protein eS6 (217 aa).

This sequence belongs to the eukaryotic ribosomal protein eS6 family. In terms of processing, phosphorylated.

In Encephalitozoon cuniculi (strain GB-M1) (Microsporidian parasite), this protein is Small ribosomal subunit protein eS6 (RPS6).